The sequence spans 201 residues: Orotate phosphoribosyltransferase (201 aa).

Residue 113–121 participates in 5-phospho-alpha-D-ribose 1-diphosphate binding; it reads EDIITTGKS. Orotate is bound by residues Thr117 and Arg145.

The protein belongs to the purine/pyrimidine phosphoribosyltransferase family. PyrE subfamily. In terms of assembly, homodimer. It depends on Mg(2+) as a cofactor.

The catalysed reaction is orotidine 5'-phosphate + diphosphate = orotate + 5-phospho-alpha-D-ribose 1-diphosphate. Its pathway is pyrimidine metabolism; UMP biosynthesis via de novo pathway; UMP from orotate: step 1/2. Functionally, catalyzes the transfer of a ribosyl phosphate group from 5-phosphoribose 1-diphosphate to orotate, leading to the formation of orotidine monophosphate (OMP). The chain is Orotate phosphoribosyltransferase from Helicobacter pylori (strain HPAG1).